The following is a 233-amino-acid chain: Transcriptional regulatory protein WalR (233 aa).

One can recognise a Response regulatory domain in the interval 4–117 (KVVVVDDEKP…ELIARVKANL (114 aa)). Asp-53 carries the post-translational modification 4-aspartylphosphate. The ompR/PhoB-type DNA-binding region spans 132-231 (TNEITIKDIV…RRGVGYFLQQ (100 aa)).

In terms of processing, phosphorylated by WalK.

Its subcellular location is the cytoplasm. In terms of biological role, member of the two-component regulatory system WalK/WalR. The sequence is that of Transcriptional regulatory protein WalR (walR) from Staphylococcus haemolyticus (strain JCSC1435).